The following is a 1249-amino-acid chain: Fanconi anemia group J protein (1249 aa).

The Helicase ATP-binding domain occupies 11-442 (GGVKIYFPYK…KDHEPLRAVC (432 aa)). Over residues 102-127 (QGTSRHFNYPSTPPSERNGTSSTCQD) the composition is skewed to polar residues. Positions 102-131 (QGTSRHFNYPSTPPSERNGTSSTCQDSPEK) are disordered. The Nuclear localization signal signature appears at 158–175 (KKRIRPLETTQQIRKRHC). 185–192 (AKVDSGKT) contributes to the ATP binding site. 4 residues coordinate [4Fe-4S] cluster: Cys283, Cys298, Cys310, and Cys350. The DEAH box motif lies at 393 to 396 (DEAH). 7 positions are modified to phosphoserine: Ser505, Ser927, Ser930, Ser956, Ser990, Ser1004, and Ser1032. The tract at residues 888–1063 (HQKVLNVSIK…ESSNLTVNTS (176 aa)) is interaction with BRCA1. 2 disordered regions span residues 1018 to 1042 (KATP…EKME) and 1108 to 1127 (VSEE…EAED). Polar residues predominate over residues 1023–1032 (LGSSENSASS). Residues 1110–1122 (EEDKQSTSNRDFE) are compositionally biased toward basic and acidic residues. Ser1237 carries the post-translational modification Phosphoserine. Position 1249 is an N6-acetyllysine (Lys1249).

This sequence belongs to the DEAD box helicase family. DEAH subfamily. As to quaternary structure, interacts with the replication protein A complex (RPA) via the RPA1 subunit; following DNA damage they colocalize in foci in the nucleus. Binds directly to the BRCT domains of BRCA1. Interacts with the CIA complex components CIAO1, CIAO2B and MMS19. The cofactor is [4Fe-4S] cluster. Phosphorylated. Phosphorylation is necessary for interaction with BRCA1, and is cell-cycle regulated. Post-translationally, acetylation at Lys-1249 facilitates DNA end processing required for repair and checkpoint signaling. Ubiquitously expressed, with highest levels in testis.

The protein localises to the nucleus. The protein resides in the cytoplasm. It catalyses the reaction Couples ATP hydrolysis with the unwinding of duplex DNA at the replication fork by translocating in the 5'-3' direction. This creates two antiparallel DNA single strands (ssDNA). The leading ssDNA polymer is the template for DNA polymerase III holoenzyme which synthesizes a continuous strand.. It carries out the reaction ATP + H2O = ADP + phosphate + H(+). Helicase activity on forked substrates is stimulated by replication protein A complex heterotrimer (RPA1, RPA2, RPA3). Helicase activity on G-quadruplex DNA is stimulated 3-fold by RPA, and inhibited by MSH2/MSH6. Unwinding of G-quadruplex DNA is inhibited by ATP-gamma-S and telomestatin (TMS); TMA does not inhibit unwinding of forked-duplex DNA. Helicase activity on dsDNA and G-quadruplex DNA is inhibited by porphyrin derivatives meso-tetra (N-methyl-4-pyridyl) porphine tetra tosylate (T4) and N-methyl mesoporphyrin IX (NMM). Functionally, DNA-dependent ATPase and 5'-3' DNA helicase required for the maintenance of chromosomal stability. Acts late in the Fanconi anemia pathway, after FANCD2 ubiquitination. Involved in the repair of DNA double-strand breaks by homologous recombination in a manner that depends on its association with BRCA1. Involved in the repair of abasic sites at replication forks by promoting the degradation of DNA-protein cross-links: acts by catalyzing unfolding of HMCES DNA-protein cross-link via its helicase activity, exposing the underlying DNA and enabling cleavage of the DNA-protein adduct by the SPRTN metalloprotease. Can unwind RNA:DNA substrates. Unwinds G-quadruplex DNA; unwinding requires a 5'-single stranded tail. The sequence is that of Fanconi anemia group J protein from Homo sapiens (Human).